The primary structure comprises 244 residues: Probable transcriptional regulatory protein CHAB381_1426 (244 aa).

The protein belongs to the TACO1 family.

The protein localises to the cytoplasm. The polypeptide is Probable transcriptional regulatory protein CHAB381_1426 (Campylobacter hominis (strain ATCC BAA-381 / DSM 21671 / CCUG 45161 / LMG 19568 / NCTC 13146 / CH001A)).